Reading from the N-terminus, the 174-residue chain is Peptidyl-prolyl cis-trans isomerase-like 1 (174 aa).

Residues 5–159 form the PPIase cyclophilin-type domain; sequence SPTYVTFDTS…EEIKIHRARL (155 aa).

It belongs to the cyclophilin-type PPIase family. PPIL1 subfamily.

It catalyses the reaction [protein]-peptidylproline (omega=180) = [protein]-peptidylproline (omega=0). PPIases accelerate the folding of proteins. It catalyzes the cis-trans isomerization of proline imidic peptide bonds in oligopeptides. The sequence is that of Peptidyl-prolyl cis-trans isomerase-like 1 (CYP1) from Cryptococcus neoformans var. neoformans serotype D (strain B-3501A) (Filobasidiella neoformans).